Here is a 266-residue protein sequence, read N- to C-terminus: Proline-rich protein 23A (266 aa).

Low complexity predominate over residues 1-18 (MGSRPRSPSAFPAPWWGQ). 2 disordered regions span residues 1–47 (MGSR…SLED) and 197–266 (EPCA…LFQE). Residues 227–238 (PSSPLQPLPPSP) show a composition bias toward pro residues. A compositionally biased stretch (basic residues) spans 255–266 (PPCKARRRLFQE).

This sequence belongs to the PRR23 family.

This Homo sapiens (Human) protein is Proline-rich protein 23A (PRR23A).